Reading from the N-terminus, the 270-residue chain is Putative hydro-lyase Reut_A2449 (270 aa).

The protein belongs to the D-glutamate cyclase family.

The sequence is that of Putative hydro-lyase Reut_A2449 from Cupriavidus pinatubonensis (strain JMP 134 / LMG 1197) (Cupriavidus necator (strain JMP 134)).